Here is a 411-residue protein sequence, read N- to C-terminus: Fructose-1,6-bisphosphatase, chloroplastic (411 aa).

The transit peptide at 1 to 53 (MAATAGATPSSHLLLSSSRHVAASPQPRILFPSLSGKRVAVGKNHHATGVRCM) directs the protein to the chloroplast. Positions 133, 162, 183, 185, and 186 each coordinate Mg(2+). 186 to 189 (DGSS) lines the substrate pocket. Residues Cys227 and Cys232 are joined by a disulfide bond. Residues Asn291, Tyr323, Tyr341, Tyr343, and Lys353 each coordinate substrate. Glu359 contributes to the Mg(2+) binding site.

Belongs to the FBPase class 1 family. As to quaternary structure, homotetramer. Mg(2+) serves as cofactor.

It is found in the plastid. The protein localises to the chloroplast stroma. It catalyses the reaction beta-D-fructose 1,6-bisphosphate + H2O = beta-D-fructose 6-phosphate + phosphate. The protein operates within carbohydrate biosynthesis; Calvin cycle. This Brassica napus (Rape) protein is Fructose-1,6-bisphosphatase, chloroplastic (FBP).